Consider the following 371-residue polypeptide: Flagellar P-ring protein (371 aa).

The N-terminal stretch at 1–21 is a signal peptide; sequence MSRSFFATVLGLALAAMTVMA.

The protein belongs to the FlgI family. The basal body constitutes a major portion of the flagellar organelle and consists of four rings (L,P,S, and M) mounted on a central rod.

Its subcellular location is the periplasm. It is found in the bacterial flagellum basal body. Functionally, assembles around the rod to form the L-ring and probably protects the motor/basal body from shearing forces during rotation. The sequence is that of Flagellar P-ring protein from Caulobacter sp. (strain K31).